Consider the following 78-residue polypeptide: DNA-directed RNA polymerase subunit omega (78 aa).

Belongs to the RNA polymerase subunit omega family. In terms of assembly, in cyanobacteria the RNAP catalytic core is composed of 2 alpha, 1 beta, 1 beta', 1 gamma and 1 omega subunit. When a sigma factor is associated with the core the holoenzyme is formed, which can initiate transcription.

It carries out the reaction RNA(n) + a ribonucleoside 5'-triphosphate = RNA(n+1) + diphosphate. Promotes RNA polymerase assembly. Latches the N- and C-terminal regions of the beta' subunit thereby facilitating its interaction with the beta and alpha subunits. The polypeptide is DNA-directed RNA polymerase subunit omega (Prochlorococcus marinus (strain MIT 9312)).